The primary structure comprises 689 residues: UvrABC system protein C (689 aa).

A GIY-YIG domain is found at 16–95 (TNPGVYRFRD…IKEFAPRFNI (80 aa)). The UVR domain maps to 208–243 (KPYIRELTRQMNEAAECMDFETAAARRDDVGALERV). The disordered stretch occupies residues 316 to 337 (LAPAASGRRRTARHGSEDVVGQ).

Belongs to the UvrC family. In terms of assembly, interacts with UvrB in an incision complex.

The protein localises to the cytoplasm. In terms of biological role, the UvrABC repair system catalyzes the recognition and processing of DNA lesions. UvrC both incises the 5' and 3' sides of the lesion. The N-terminal half is responsible for the 3' incision and the C-terminal half is responsible for the 5' incision. This chain is UvrABC system protein C, found in Kocuria rhizophila (strain ATCC 9341 / DSM 348 / NBRC 103217 / DC2201).